Reading from the N-terminus, the 349-residue chain is Green-sensitive opsin-2 (349 aa).

The Extracellular portion of the chain corresponds to 1-36; the sequence is MNGTEGNNFYVPLSNRTGLVRSPFEYPQYYLAEPWQ. Residues Asn2 and Asn15 are each glycosylated (N-linked (GlcNAc...) asparagine). Residues 37–61 traverse the membrane as a helical segment; the sequence is FKLLAVYMFFLICLGLPINGLTLIC. Over 62–73 the chain is Cytoplasmic; sequence TAQHKKLRQPLN. The chain crosses the membrane as a helical span at residues 74–99; that stretch reads FILVNLAVAGAIMVCFGFTVTFYTAI. Topologically, residues 100-113 are extracellular; the sequence is NGYFALGPTGCAVE. Cys110 and Cys187 are joined by a disulfide. A helical transmembrane segment spans residues 114–133; that stretch reads GFMATLGGEVALWSLVVLAI. The Cytoplasmic portion of the chain corresponds to 134–152; sequence ERYIVVCKPMGSFKFSSTH. Residues 153 to 176 form a helical membrane-spanning segment; sequence ASAGIAFTWVMAMACAAPPLVGWS. Residues 177-202 are Extracellular-facing; it reads RYIPEGIQCSCGPDYYTLNPEYNNES. Residues 203–230 form a helical membrane-spanning segment; that stretch reads YVLYMFICHFILPVTIIFFTYGRLVCTV. The Cytoplasmic segment spans residues 231 to 252; sequence KAAAAQQQDSASTQKAEREVTK. The chain crosses the membrane as a helical span at residues 253–276; the sequence is MVILMVLGFLVAWTPYATVAAWIF. Residues 277–284 lie on the Extracellular side of the membrane; sequence FNKGAAFS. Residues 285–309 traverse the membrane as a helical segment; it reads AQFMAIPAFFSKTSALYNPVIYVLL. Lys296 carries the N6-(retinylidene)lysine modification. The Cytoplasmic portion of the chain corresponds to 310–349; that stretch reads NKQFRSCMLTTLFCGKNPLGDEESSTVSTSKTEVSSVSPA. The disordered stretch occupies residues 329 to 349; it reads GDEESSTVSTSKTEVSSVSPA. Positions 334–349 are enriched in low complexity; it reads STVSTSKTEVSSVSPA.

It belongs to the G-protein coupled receptor 1 family. Opsin subfamily. Phosphorylated on some or all of the serine and threonine residues present in the C-terminal region. As to expression, the color pigments are found in the cone photoreceptor cells.

The protein resides in the membrane. Visual pigments are the light-absorbing molecules that mediate vision. They consist of an apoprotein, opsin, covalently linked to cis-retinal. This Carassius auratus (Goldfish) protein is Green-sensitive opsin-2.